A 721-amino-acid chain; its full sequence is Ribosomal RNA large subunit methyltransferase K/L (721 aa).

A THUMP domain is found at 56-167; it reads GMYKACLWSR…REVVTVSIDL (112 aa).

The protein belongs to the methyltransferase superfamily. RlmKL family.

Its subcellular location is the cytoplasm. It catalyses the reaction guanosine(2445) in 23S rRNA + S-adenosyl-L-methionine = N(2)-methylguanosine(2445) in 23S rRNA + S-adenosyl-L-homocysteine + H(+). The enzyme catalyses guanosine(2069) in 23S rRNA + S-adenosyl-L-methionine = N(2)-methylguanosine(2069) in 23S rRNA + S-adenosyl-L-homocysteine + H(+). In terms of biological role, specifically methylates the guanine in position 2445 (m2G2445) and the guanine in position 2069 (m7G2069) of 23S rRNA. The sequence is that of Ribosomal RNA large subunit methyltransferase K/L from Marinomonas sp. (strain MWYL1).